A 206-amino-acid chain; its full sequence is Small ribosomal subunit protein uS4 (206 aa).

The S4 RNA-binding domain maps to 96–156 (GRLDNVVYRM…EKSKKQARIK (61 aa)).

The protein belongs to the universal ribosomal protein uS4 family. In terms of assembly, part of the 30S ribosomal subunit. Contacts protein S5. The interaction surface between S4 and S5 is involved in control of translational fidelity.

Its function is as follows. One of the primary rRNA binding proteins, it binds directly to 16S rRNA where it nucleates assembly of the body of the 30S subunit. Functionally, with S5 and S12 plays an important role in translational accuracy. This Histophilus somni (strain 129Pt) (Haemophilus somnus) protein is Small ribosomal subunit protein uS4.